We begin with the raw amino-acid sequence, 149 residues long: Putative inactive group IIC secretory phospholipase A2 (149 aa).

The N-terminal stretch at 1 to 18 is a signal peptide; it reads MKVIAILTLLLFCSPTHS. 4 disulfide bridges follow: cysteine 44–cysteine 142, cysteine 77–cysteine 107, cysteine 95–cysteine 112, and cysteine 97–cysteine 105. Ca(2+)-binding residues include tyrosine 45, glycine 47, and glycine 49.

Belongs to the phospholipase A2 family. Ca(2+) is required as a cofactor.

It localises to the secreted. Functionally, inactive phospholipase. The polypeptide is Putative inactive group IIC secretory phospholipase A2 (PLA2G2C) (Homo sapiens (Human)).